The following is a 906-amino-acid chain: Protein translocase subunit SecA (906 aa).

ATP is bound by residues Gln86, 104–108, and Asp499; that span reads GEGKT. The tract at residues 862-885 is disordered; the sequence is KPVVSRIDPKDRNPDDPTSWGRVS. Residues Cys890, Cys892, Cys901, and His902 each contribute to the Zn(2+) site.

This sequence belongs to the SecA family. Monomer and homodimer. Part of the essential Sec protein translocation apparatus which comprises SecA, SecYEG and auxiliary proteins SecDF-YajC and YidC. The cofactor is Zn(2+).

Its subcellular location is the cell inner membrane. The protein resides in the cytoplasm. The catalysed reaction is ATP + H2O + cellular proteinSide 1 = ADP + phosphate + cellular proteinSide 2.. Part of the Sec protein translocase complex. Interacts with the SecYEG preprotein conducting channel. Has a central role in coupling the hydrolysis of ATP to the transfer of proteins into and across the cell membrane, serving both as a receptor for the preprotein-SecB complex and as an ATP-driven molecular motor driving the stepwise translocation of polypeptide chains across the membrane. The protein is Protein translocase subunit SecA of Rickettsia massiliae (strain Mtu5).